Reading from the N-terminus, the 188-residue chain is Josephin-2 (188 aa).

One can recognise a Josephin domain in the interval 11–188; the sequence is PPTVYHERQR…EEKGSWLRTD (178 aa). Cysteine 24 acts as the Nucleophile in catalysis. Catalysis depends on histidine 125, which acts as the Proton acceptor.

Its subcellular location is the cytoplasm. The protein resides in the cytosol. The enzyme catalyses Thiol-dependent hydrolysis of ester, thioester, amide, peptide and isopeptide bonds formed by the C-terminal Gly of ubiquitin (a 76-residue protein attached to proteins as an intracellular targeting signal).. Functionally, cleaves 'Lys-63'-linked poly-ubiquitin chains, and with lesser efficiency 'Lys-48'-linked poly-ubiquitin chains (in vitro). May act as a deubiquitinating enzyme. This is Josephin-2 (JOSD2) from Homo sapiens (Human).